A 179-amino-acid chain; its full sequence is Protein GrpE (179 aa).

A disordered region spans residues 1–20 (MSEETKEEIKNEKVDEEVTE).

The protein belongs to the GrpE family. As to quaternary structure, homodimer.

The protein localises to the cytoplasm. Participates actively in the response to hyperosmotic and heat shock by preventing the aggregation of stress-denatured proteins, in association with DnaK and GrpE. It is the nucleotide exchange factor for DnaK and may function as a thermosensor. Unfolded proteins bind initially to DnaJ; upon interaction with the DnaJ-bound protein, DnaK hydrolyzes its bound ATP, resulting in the formation of a stable complex. GrpE releases ADP from DnaK; ATP binding to DnaK triggers the release of the substrate protein, thus completing the reaction cycle. Several rounds of ATP-dependent interactions between DnaJ, DnaK and GrpE are required for fully efficient folding. The chain is Protein GrpE from Lactococcus lactis subsp. cremoris (strain MG1363).